The sequence spans 142 residues: Transcriptional regulator MraZ (142 aa).

SpoVT-AbrB domains follow at residues 5 to 51 (ASAL…PRPE) and 77 to 120 (AMDV…DSQT).

The protein belongs to the MraZ family. In terms of assembly, forms oligomers.

It localises to the cytoplasm. The protein localises to the nucleoid. The protein is Transcriptional regulator MraZ of Burkholderia cenocepacia (strain ATCC BAA-245 / DSM 16553 / LMG 16656 / NCTC 13227 / J2315 / CF5610) (Burkholderia cepacia (strain J2315)).